We begin with the raw amino-acid sequence, 129 residues long: Transcription antitermination protein NusB (129 aa).

This sequence belongs to the NusB family.

Functionally, involved in transcription antitermination. Required for transcription of ribosomal RNA (rRNA) genes. Binds specifically to the boxA antiterminator sequence of the ribosomal RNA (rrn) operons. This Staphylococcus aureus (strain USA300 / TCH1516) protein is Transcription antitermination protein NusB.